A 310-amino-acid polypeptide reads, in one-letter code: tRNA dimethylallyltransferase (310 aa).

Position 10–17 (10–17 (GPTAVGKS)) interacts with ATP. 12–17 (TAVGKS) lines the substrate pocket. The interaction with substrate tRNA stretch occupies residues 35 to 38 (DSMQ).

This sequence belongs to the IPP transferase family. Monomer. Requires Mg(2+) as cofactor.

The catalysed reaction is adenosine(37) in tRNA + dimethylallyl diphosphate = N(6)-dimethylallyladenosine(37) in tRNA + diphosphate. Its function is as follows. Catalyzes the transfer of a dimethylallyl group onto the adenine at position 37 in tRNAs that read codons beginning with uridine, leading to the formation of N6-(dimethylallyl)adenosine (i(6)A). This Clostridium perfringens (strain 13 / Type A) protein is tRNA dimethylallyltransferase.